The following is a 540-amino-acid chain: Putative BTB/POZ domain-containing protein R224 (540 aa).

Positions 16-88 constitute a BTB domain; sequence TDLELTLIDE…FYKNPIKYKN (73 aa). A helical transmembrane segment spans residues 356-376; the sequence is IFVSLLNDIIFVLSSINMYFI.

The protein belongs to the mimivirus BTB/WD family.

The protein resides in the membrane. This chain is Putative BTB/POZ domain-containing protein R224, found in Acanthamoeba polyphaga (Amoeba).